We begin with the raw amino-acid sequence, 404 residues long: Intracellular hyaluronan-binding protein 4.L (404 aa).

3 disordered regions span residues 1 to 21 (MRLD…MQDN), 51 to 288 (LTRR…QEMS), and 359 to 379 (LTRP…REEA). Polar residues predominate over residues 8-19 (ETPSSPVNTEMQ). 3 stretches are compositionally biased toward basic and acidic residues: residues 71 to 81 (GKKESQKDRKA), 145 to 159 (KVDR…REVR), and 165 to 184 (RSNE…DKQM). Residues 188–200 (GGRGGMRGRGRGG) are compositionally biased toward gly residues. Composition is skewed to basic and acidic residues over residues 205 to 233 (TEND…DKRG) and 270 to 281 (EEHAKVPEEKNE).

It belongs to the SERBP1-HABP4 family. Associates with ribosomes; promoting ribosome stabilization. Interacts with eef2/eEF2; promoting ribosome stabilization.

It localises to the nucleus. The protein resides in the cytoplasm. Its subcellular location is the stress granule. The protein localises to the nucleolus. It is found in the nucleus speckle. It localises to the cajal body. Ribosome-binding protein that promotes ribosome hibernation, a process during which ribosomes are stabilized in an inactive state and preserved from proteasomal degradation. Acts via its association with eef2/eEF2 factor at the A-site of the ribosome, promoting ribosome stabilization in an inactive state compatible with storage. Plays a key role in ribosome hibernation in the mature egg by promoting ribosome stabilization. Ribosomes, which are produced in large quantities during oogenesis, are stored and translationally repressed in the egg and early embryo. The chain is Intracellular hyaluronan-binding protein 4.L from Xenopus laevis (African clawed frog).